The primary structure comprises 128 residues: S-adenosylmethionine decarboxylase proenzyme (128 aa).

Ser-63 acts as the Schiff-base intermediate with substrate; via pyruvic acid in catalysis. Position 63 is a pyruvic acid (Ser); by autocatalysis (Ser-63). The active-site Proton acceptor; for processing activity is His-68. The active-site Proton donor; for catalytic activity is Cys-83.

The protein belongs to the prokaryotic AdoMetDC family. Type 1 subfamily. In terms of assembly, heterotetramer of two alpha and two beta chains arranged as a dimer of alpha/beta heterodimers. It depends on pyruvate as a cofactor. In terms of processing, is synthesized initially as an inactive proenzyme. Formation of the active enzyme involves a self-maturation process in which the active site pyruvoyl group is generated from an internal serine residue via an autocatalytic post-translational modification. Two non-identical subunits are generated from the proenzyme in this reaction, and the pyruvate is formed at the N-terminus of the alpha chain, which is derived from the carboxyl end of the proenzyme. The post-translation cleavage follows an unusual pathway, termed non-hydrolytic serinolysis, in which the side chain hydroxyl group of the serine supplies its oxygen atom to form the C-terminus of the beta chain, while the remainder of the serine residue undergoes an oxidative deamination to produce ammonia and the pyruvoyl group blocking the N-terminus of the alpha chain.

The enzyme catalyses S-adenosyl-L-methionine + H(+) = S-adenosyl 3-(methylsulfanyl)propylamine + CO2. It participates in amine and polyamine biosynthesis; S-adenosylmethioninamine biosynthesis; S-adenosylmethioninamine from S-adenosyl-L-methionine: step 1/1. Its function is as follows. Catalyzes the decarboxylation of S-adenosylmethionine to S-adenosylmethioninamine (dcAdoMet), the propylamine donor required for the synthesis of the polyamines spermine and spermidine from the diamine putrescine. The protein is S-adenosylmethionine decarboxylase proenzyme of Leptospira borgpetersenii serovar Hardjo-bovis (strain JB197).